The primary structure comprises 170 residues: MTIKPLIILPDPVLRQQSKLIEQVDAEVLRLADDMLETMYDAPGIGLAAIQIGVPRRMLVIDVAREGEEKTPVVFINPEILKVSDDISTYEEGCLSIPDYYAEVERPASLTVQYVGRDGKQQTVEADGLLATCLQHEIDHLNGVLFIDHISRLKRDMVIKKFTKAARAKI.

Fe cation contacts are provided by C94 and H136. Residue E137 is part of the active site. H140 is a Fe cation binding site.

Belongs to the polypeptide deformylase family. The cofactor is Fe(2+).

The enzyme catalyses N-terminal N-formyl-L-methionyl-[peptide] + H2O = N-terminal L-methionyl-[peptide] + formate. In terms of biological role, removes the formyl group from the N-terminal Met of newly synthesized proteins. Requires at least a dipeptide for an efficient rate of reaction. N-terminal L-methionine is a prerequisite for activity but the enzyme has broad specificity at other positions. The protein is Peptide deformylase of Agrobacterium fabrum (strain C58 / ATCC 33970) (Agrobacterium tumefaciens (strain C58)).